We begin with the raw amino-acid sequence, 604 residues long: Netrin-1 (604 aa).

Positions 1 to 24 are cleaved as a signal peptide; sequence MMRAVWEALAALAAVACLVGAVRG. Positions 47–284 constitute a Laminin N-terminal domain; sequence HPRRCIPDFV…AVSDLQVGGR (238 aa). N-linked (GlcNAc...) asparagine glycosylation is found at Asn-95, Asn-116, and Asn-131. 15 disulfide bridges follow: Cys-119-Cys-152, Cys-285-Cys-294, Cys-287-Cys-304, Cys-306-Cys-315, Cys-318-Cys-338, Cys-341-Cys-350, Cys-343-Cys-368, Cys-371-Cys-380, Cys-383-Cys-401, Cys-404-Cys-416, Cys-406-Cys-423, Cys-425-Cys-434, Cys-437-Cys-451, Cys-472-Cys-544, and Cys-491-Cys-601. 3 consecutive Laminin EGF-like domains span residues 285 to 340, 341 to 403, and 404 to 453; these read CKCN…ECVA, CNCN…ACKA, and CDCH…PCIK. The N-linked (GlcNAc...) asparagine glycan is linked to Asn-417. Residues 472–601 form the NTR domain; the sequence is CDSYCKASKG…FQQREKKGKC (130 aa). Positions 530–532 match the Cell attachment site motif; sequence RGD.

Binds to its receptors; DCC, UNC5A, UNC5B, UNC5C and probably UNC5D. Binds to its receptor; DSCAM. Interacts with DCC. Interacts with APP. In terms of tissue distribution, widely expressed in normal adult tissues with highest levels in heart, small intestine, colon, liver and prostate. Reduced expression in brain tumors and neuroblastomas. Expressed in epididymis (at protein level).

It localises to the secreted. The protein resides in the cytoplasm. Netrins control guidance of CNS commissural axons and peripheral motor axons. Its association with either DCC or some UNC5 receptors will lead to axon attraction or repulsion, respectively. Binding to UNC5C might cause dissociation of UNC5C from polymerized TUBB3 in microtubules and thereby lead to increased microtubule dynamics and axon repulsion. Involved in dorsal root ganglion axon projection towards the spinal cord. It also serves as a survival factor via its association with its receptors which prevent the initiation of apoptosis. Involved in tumorigenesis by regulating apoptosis. This Homo sapiens (Human) protein is Netrin-1 (NTN1).